A 385-amino-acid polypeptide reads, in one-letter code: Lipid-A-disaccharide synthase (385 aa).

It belongs to the LpxB family.

The enzyme catalyses a lipid X + a UDP-2-N,3-O-bis[(3R)-3-hydroxyacyl]-alpha-D-glucosamine = a lipid A disaccharide + UDP + H(+). Its pathway is bacterial outer membrane biogenesis; LPS lipid A biosynthesis. In terms of biological role, condensation of UDP-2,3-diacylglucosamine and 2,3-diacylglucosamine-1-phosphate to form lipid A disaccharide, a precursor of lipid A, a phosphorylated glycolipid that anchors the lipopolysaccharide to the outer membrane of the cell. This is Lipid-A-disaccharide synthase from Rickettsia canadensis (strain McKiel).